A 506-amino-acid chain; its full sequence is MTQAVMLQGTASDVGKSVLAAGLCRIFYQDGLRTAPFKSQNMALNSGITSDGKEMGRAQIFQAEAAGITPDVRMNPVLLKPTSDRQAQVVLMGKVATNMDAVSYHDYKPRLREQILAVYNSLAQEYDVIVLEGAGSPAEINLRDRDIVNMGMAEMAQCPVILVADIDRGGVFAAIYGTLALLHKQERDRVKGVIINKFRGDVALLYSGIEQIESLTGVPVLGVMPWLDVDLEDEDGVALQNDKYRGNAPRDITIAIVQLPHISNFTDFNALAAQPDVRIRYIRRPEALTDADLVILPGSKNTLSDLAWLRESGMADAVLQTHRQGVPVMGICGGYQMLGDTIVDEVESGLGTQPGLGLLNTITRFAQDKITTQVNATMSGELPSWLAAAAGLPVRGYEIHMGETVLQEGCCTAMTLQKNGCSVADGAVTADGLAFGTYLHGLFDSDAFTRAVVNGLRARKGLAPWETTFCYAEHKARQFDLLAEAMRQHIDIDKIYTIMQQHQEPV.

The GATase cobBQ-type domain maps to 251-448 (DITIAIVQLP…LHGLFDSDAF (198 aa)). Catalysis depends on Cys332, which acts as the Nucleophile. Residue His440 is part of the active site.

The protein belongs to the CobB/CobQ family. CobQ subfamily.

It participates in cofactor biosynthesis; adenosylcobalamin biosynthesis. Functionally, catalyzes amidations at positions B, D, E, and G on adenosylcobyrinic A,C-diamide. NH(2) groups are provided by glutamine, and one molecule of ATP is hydrogenolyzed for each amidation. This Salmonella choleraesuis (strain SC-B67) protein is Cobyric acid synthase.